The following is a 537-amino-acid chain: Chaperonin GroEL 2 (537 aa).

ATP is bound by residues 29–32 (TLGP), 86–90 (DGTTT), G413, 477–479 (NAA), and D493.

The protein belongs to the chaperonin (HSP60) family. Forms a cylinder of 14 subunits composed of two heptameric rings stacked back-to-back. Interacts with the co-chaperonin GroES.

The protein resides in the cytoplasm. It catalyses the reaction ATP + H2O + a folded polypeptide = ADP + phosphate + an unfolded polypeptide.. In terms of biological role, together with its co-chaperonin GroES, plays an essential role in assisting protein folding. The GroEL-GroES system forms a nano-cage that allows encapsulation of the non-native substrate proteins and provides a physical environment optimized to promote and accelerate protein folding. The protein is Chaperonin GroEL 2 of Rhodococcus jostii (strain RHA1).